The primary structure comprises 89 residues: Small ribosomal subunit protein uS15 (89 aa).

Belongs to the universal ribosomal protein uS15 family. In terms of assembly, part of the 30S ribosomal subunit. Forms a bridge to the 50S subunit in the 70S ribosome, contacting the 23S rRNA.

One of the primary rRNA binding proteins, it binds directly to 16S rRNA where it helps nucleate assembly of the platform of the 30S subunit by binding and bridging several RNA helices of the 16S rRNA. Its function is as follows. Forms an intersubunit bridge (bridge B4) with the 23S rRNA of the 50S subunit in the ribosome. The sequence is that of Small ribosomal subunit protein uS15 from Chlorobium phaeovibrioides (strain DSM 265 / 1930) (Prosthecochloris vibrioformis (strain DSM 265)).